The following is a 113-amino-acid chain: Eukaryotic translation initiation factor 1b (113 aa).

Ser-2 bears the N-acetylserine mark. Ser-9 bears the Phosphoserine mark.

The protein belongs to the SUI1 family.

Probably involved in translation. The polypeptide is Eukaryotic translation initiation factor 1b (EIF1B) (Homo sapiens (Human)).